A 384-amino-acid chain; its full sequence is F-box only protein 5-B (384 aa).

2 disordered regions span residues 1–20 (MMCGFTSNPSPKKLLSKSSA) and 79–106 (DEENSSLQDSGYSSILQNDSPCQDETDS). The span at 9–19 (PSPKKLLSKSS) shows a compositional bias: low complexity. Residues 83–99 (SSLQDSGYSSILQNDSP) show a composition bias toward polar residues. An F-box domain is found at 191-238 (AELFHRDFKHLLTKILRHLNAMDLINVIGVSTTWRKILQKDNWAYNTY). The segment at 311–359 (SLKACVDCGSPAKYDSYLHRAICTRESCKLDFCTLCSCKYHSSKSCLIS) adopts a ZBR-type zinc-finger fold. 8 residues coordinate Zn(2+): cysteine 315, cysteine 318, cysteine 333, cysteine 338, cysteine 343, cysteine 346, histidine 351, and cysteine 356.

Part of a SCF (SKP1-cullin-F-box) protein ligase complex. Interacts with btrc. Interacts with skp1. Interacts with cdc20. Interacts with pin1; stabilizes fbxo5 by preventing its association with btrc in an isomerization-dependent pathway; this interaction is present during G2 phase and prevents fbxo5 degradation. Interacts with plk1. Post-translationally, proteolysed; proteolysis is induced by both cyclin B-cdk1 and cyclin A-cdk1/2 complex through probable phosphorylation. Proteolysis is inhibited by pin1 during G2.

It is found in the nucleus. Its subcellular location is the cytoplasm. The protein localises to the cytoskeleton. It localises to the spindle. The protein resides in the microtubule organizing center. It is found in the centrosome. It participates in protein modification; protein ubiquitination. In terms of biological role, regulates progression through early mitosis by inhibiting the anaphase promoting complex/cyclosome (APC). Binds to the APC activators cdc20 to prevent APC activation. Can also bind directly to the APC to inhibit substrate-binding. Required to arrest unfertilized eggs at metaphase of meiosis II, by preventing their release from metaphase of meiosis II, through inhibition of APC-dependent cyclin B destruction leading to stabilization of cyclin B-cdk1 complex activity. The protein is F-box only protein 5-B (fbxo5-b) of Xenopus laevis (African clawed frog).